We begin with the raw amino-acid sequence, 238 residues long: Probable xyloglucan-specific endo-beta-1,4-glucanase A (238 aa).

A signal peptide spans M1–A18. N-linked (GlcNAc...) asparagine glycans are attached at residues N106 and N171.

It belongs to the glycosyl hydrolase 12 (cellulase H) family.

Its subcellular location is the secreted. The enzyme catalyses xyloglucan + H2O = xyloglucan oligosaccharides.. In terms of biological role, catalyzes endohydrolysis of 1,4-beta-D-glucosidic linkages in xyloglucan with retention of the beta-configuration of the glycosyl residues. Specific for xyloglucan and does not hydrolyze other cell wall components. This Aspergillus fumigatus (strain ATCC MYA-4609 / CBS 101355 / FGSC A1100 / Af293) (Neosartorya fumigata) protein is Probable xyloglucan-specific endo-beta-1,4-glucanase A (xgeA).